Consider the following 429-residue polypeptide: Palmitoyltransferase SWF1 (429 aa).

The Lumenal segment spans residues 1–3 (MGT). Residues 4–24 (IAIIAAVILGISFMTFVAFFG) traverse the membrane as a helical segment. Residues 25 to 79 (RLPALRNTPISFLHRLIWIHLPNGILTVDRTLTNGRLTTSLTRLGRHLWYDQHPT) are Cytoplasmic-facing. A helical transmembrane segment spans residues 80–100 (ILIFFFLLLSVGEYLYLPVAW). The Lumenal segment spans residues 101-112 (PHFSFTHKFFGT). Residues 113-133 (IAILCPYIFLYLSAYTDPGVI) form a helical membrane-spanning segment. Topologically, residues 134–201 (NAKTHVREMA…CVGANNQRWF (68 aa)) are cytoplasmic. A DHHC domain is found at 156–206 (TSCETCHLLKPARSKHCSICKKCVGRMDHHCIFINNCVGANNQRWFILLLL). The chain crosses the membrane as a helical span at residues 202–222 (ILLLLSTAILTLYGGVLGLVI). Residues 223–274 (IRAKIQARFPYWTLMPWWTSTQAWNSGDLDFHRWLLLWSWGLQSGVAMGGVT) are Lumenal-facing. The helical transmembrane segment at 275–295 (LLALLTTPLVWGLLGYHLWLV) threads the bilayer. Topologically, residues 296 to 429 (YCGTTTNESM…ERGRNRRRSS (134 aa)) are cytoplasmic. Residues 408-421 (GRSPVDEREFGRER) show a composition bias toward basic and acidic residues. The interval 408 to 429 (GRSPVDEREFGRERGRNRRRSS) is disordered.

The protein belongs to the DHHC palmitoyltransferase family. SWF1 subfamily.

The protein localises to the endoplasmic reticulum membrane. The enzyme catalyses L-cysteinyl-[protein] + hexadecanoyl-CoA = S-hexadecanoyl-L-cysteinyl-[protein] + CoA. Palmitoyltransferase that targets several endosomal SNAREs. Palmitoylates the SNAREs at cysteine residues close to the cytoplasmic end of their transmembrane domain. May have a role in the cellular quality control of transmembrane domain-containing proteins. This is Palmitoyltransferase SWF1 (swf-1) from Neurospora crassa (strain ATCC 24698 / 74-OR23-1A / CBS 708.71 / DSM 1257 / FGSC 987).